A 2753-amino-acid chain; its full sequence is Maltase-glucoamylase (2753 aa).

The Cytoplasmic segment spans residues 1–13; that stretch reads MARKKLKKFTTLE. A helical; Signal-anchor for type II membrane protein membrane pass occupies residues 14-34; sequence IVLSVLLLVLFIISIVLIVLL. Residues 35–2753 lie on the Lumenal side of the membrane; the sequence is AKESLKSTAP…FTSLTWISTL (2719 aa). The tract at residues 41–87 is disordered; the sequence is STAPDPGTTGTPDPGTTGTPDPGTTGTTHARTTGPPDPGTTGTTPVS. Low complexity predominate over residues 44 to 85; the sequence is PDPGTTGTPDPGTTGTPDPGTTGTTHARTTGPPDPGTTGTTP. The 47-residue stretch at 88–134 folds into the P-type 1 domain; the sequence is AECPVVNELERINCIPDQPPTKATCDQRGCCWNPQGAVSVPWCYYSK. Disulfide bonds link Cys-90–Cys-118, Cys-101–Cys-117, and Cys-112–Cys-130. Asn-135 carries an N-linked (GlcNAc...) asparagine glycan. Asp-289 contributes to the acarbose binding site. Residue Asn-295 is glycosylated (N-linked (GlcNAc...) asparagine). The interval 356-737 is maltase; sequence PEQVVQEYLE…FRAHSRGDTV (382 aa). Asp-413 is an acarbose binding site. A sulfotyrosine mark is found at Tyr-416 and Tyr-425. Residues Asn-457, Asn-458, and Asn-479 are each glycosylated (N-linked (GlcNAc...) asparagine). Asp-529 serves as the catalytic Nucleophile. The active site involves Glu-532. Residues Arg-612 and Asp-628 each contribute to the acarbose site. A disulfide bridge links Cys-659 with Cys-670. His-686 contacts acarbose. 8 N-linked (GlcNAc...) asparagine glycosylation sites follow: Asn-707, Asn-749, Asn-827, Asn-885, Asn-912, Asn-977, Asn-989, and Asn-1255. The region spanning 954-1000 is the P-type 2 domain; sequence WSIKIRDEEKIDCYPDENGASAENCTARGCIWEASNSSGVPFCYFVN. 2 disulfide bridges follow: Cys-966–Cys-983 and Cys-978–Cys-996. Positions 1221–1632 are glucoamylase; the sequence is TPELVTQQYT…MQKAHTEGVT (412 aa). The residue at position 1282 (Tyr-1282) is a Sulfotyrosine. Residues Asn-1323, Asn-1364, and Asn-1388 are each glycosylated (N-linked (GlcNAc...) asparagine). The active-site Nucleophile is the Asp-1420. Residue Glu-1423 is part of the active site. Asp-1526 acts as the Proton donor in catalysis. In terms of domain architecture, P-type 3 spans 1850-1896; sequence WSIKIRDEEKIDCYPDENGDSAENCTARGCIWEASNSSGVPFCYFVN. Disulfide bonds link Cys-1862/Cys-1879 and Cys-1874/Cys-1892. Asn-2499, Asn-2568, Asn-2738, and Asn-2743 each carry an N-linked (GlcNAc...) asparagine glycan.

Belongs to the glycosyl hydrolase 31 family. As to quaternary structure, monomer. N- and O-glycosylated. Post-translationally, does not undergo intracellular or extracellular proteolytic cleavage. In terms of processing, sulfated. As to expression, broadly expressed. Highly expressed in small intestine. Expressed in granulocytes.

The protein localises to the apical cell membrane. It carries out the reaction Hydrolysis of terminal, non-reducing (1-&gt;4)-linked alpha-D-glucose residues with release of alpha-D-glucose.. The catalysed reaction is D-maltoheptaose + H2O = D-maltohexaose + alpha-D-glucose. The enzyme catalyses D-maltohexaose + H2O = D-maltopentaose + alpha-D-glucose. It catalyses the reaction D-maltopentaose + H2O = D-maltotetraose + alpha-D-glucose. It carries out the reaction D-maltotetraose + H2O = D-maltotriose + alpha-D-glucose. The catalysed reaction is D-maltotriose + H2O = D-maltose + alpha-D-glucose. The enzyme catalyses D-maltose + H2O = alpha-D-glucose + D-glucose. It catalyses the reaction nigerose + H2O = alpha-D-glucose + D-glucose. It carries out the reaction kojibiose + H2O = alpha-D-glucose + D-glucose. The catalysed reaction is isomaltose + H2O = alpha-D-glucose + D-glucose. The enzyme catalyses 6-O-alpha-D-glucopyranosyl-D-fructose + H2O = alpha-D-glucose + D-fructose. It participates in carbohydrate degradation. With respect to regulation, down-regulated at high oligomaltose concentration as it occurs during the mealtime. Down-regulated by anti-diabetic drug acarbose. Alpha-(1,4) exo-glucosidase involved in breakdown of dietary starch oligosaccharides in small intestine. Cleaves the non-reducing alpha-(1,4)-linked glucose residue in linear dextrins with retention of anomeric center stereochemistry. Mainly hydrolyzes short length oligomaltoses having two to seven glucose residues. Can cleave alpha-(1,2), alpha-(1,3) and alpha-(1,6) glycosidic linkages with lower efficiency, whereas beta glycosidic linkages are usually not hydrolyzed. This chain is Maltase-glucoamylase, found in Homo sapiens (Human).